The primary structure comprises 135 residues: Insoluble matrix shell protein 5 (135 aa).

An N-terminal signal peptide occupies residues 1–16 (MILVVTLACLIAVVCC). EF-hand domains lie at 21–56 (TDQG…ADLN) and 93–128 (IEFV…TVRP). Ca(2+) is bound by residues Asp-34, Asp-36, Asn-38, Lys-40, Glu-45, Asp-106, Asn-108, Asp-110, Glu-112, and Glu-117.

In terms of tissue distribution, component of the acid-insoluble organic matrix of the calcified shell.

The protein resides in the secreted. This chain is Insoluble matrix shell protein 5, found in Ruditapes philippinarum (Japanese carpet shell).